Consider the following 729-residue polypeptide: Serine/threonine-protein kinase TBK1 (729 aa).

Residues 9–310 (WLLSDILGQG…ETSDILHRMV (302 aa)) enclose the Protein kinase domain. 15 to 23 (LGQGATANV) provides a ligand contact to ATP. Lysine 30 participates in a covalent cross-link: Glycyl lysine isopeptide (Lys-Gly) (interchain with G-Cter in ubiquitin). Residue lysine 38 participates in ATP binding. The active-site Proton acceptor is aspartate 135. Serine 172 is modified (phosphoserine; by autocatalysis and IKKB). Residues 309–385 (MVIHVFSLQQ…ENPIFVVSRE (77 aa)) enclose the Ubiquitin-like domain. Lysine 401 participates in a covalent cross-link: Glycyl lysine isopeptide (Lys-Gly) (interchain with G-Cter in ubiquitin). Coiled coils occupy residues 407–657 (DLDG…LQET) and 658–713 (LPQK…ILER). An N6-methyllysine; by SETD4 modification is found at lysine 607. The interaction with AZI2, TANK and TBKBP1 stretch occupies residues 621–729 (RKMLHLRKQL…DGGLRNVDCL (109 aa)). Lysine 670 participates in a covalent cross-link: Glycyl lysine isopeptide (Lys-Gly) (interchain with G-Cter in ubiquitin). A Phosphoserine modification is found at serine 716.

This sequence belongs to the protein kinase superfamily. Ser/Thr protein kinase family. I-kappa-B kinase subfamily. Homodimer. Interacts with DDX3X, TIRAP and TRAF2. Part of a ternary complex consisting of TANK, TRAF2 and TBK1. Interacts with AZI2, TANK and TBKBP1; these interactions are mutually exclusive and mediate TBK1 activation. Interacts with GSK3B; this interaction promotes TBK1 self-association and autophosphorylation. Interacts with SIKE1; SIKE1 is associated with TBK1 under physiological condition and dissociated from TBK1 upon viral infection or TLR3 stimulation. Interacts with IRF3, leading to IRF3 phosphorylation. Interacts with RIGI. Interacts with CYLD. Interacts with OPTN and TRAF3. Interacts with SRC. Interacts with the exocyst complex subunit SEC5/EXOC2; this interaction is sufficient to trigger TBK1 activity. Interacts with STING1, leading to STING1 phosphorylation. Interacts with IFIT3 (via N-terminus). Interacts with MAVS; interaction only takes place in the presence of IFIT3 and leads to MAVS phosphorylation. Interacts (via protein kinase domain) with TTLL12 (via TTL domain); the interaction prevents MAVS binding to TBK1. Interacts with TICAM1; this interaction is enhanced in the presence of WDFY1 and leads to TICAM1 phosphorylation. Interacts with TRIM26. Interacts with TRIM23. Interacts with TTC4 and IKBKE. Interacts with HNRNPA2B1. Interacts with DDX3X. Interacts with TRIM14. Interacts with CEP170; efficient complex formation may be dependent on the presence of CCDC61. Interacts with TRAF3IP3. Interacts with HSP90AA1; the interaction mediates TBK1 association with TOMM70. Interacts with TAX1BP1. Interacts with kinase IKBKB; the complex interacts with STAT1, leading to phosphorylation of STAT1 on 'Thr-749' by IKBKB. Interacts with ICOS; this interaction is critical for the maturation of T follicular regulatory cells. Interacts with RNF144B; this interaction prevents TBK1 phosphorylation and subsequent activation. Interacts with ASB8; this interaction promotes TBK1 proteasomal degradation. Forms a ternary complex with ZNF268 and SETD4; the interaction with SETD4 is ZNF268-dependent and leads to TBK1 monomethylation, which enhances its interaction with IRF3 and MAVS. In terms of assembly, (Microbial infection) Interacts with Borna disease virus (BDV) P protein leading to its phosphorylation. As to quaternary structure, (Microbial infection) Interacts with Ebola virus protein VP35. (Microbial infection) Interacts with HCV NS3; this interaction leads to inhibition of cellular antiviral response by blocking necessary interactions between the TBK1 and its substrates IRF3 and IRF7. In terms of assembly, (Microbial infection) Interacts with human herpesvirus 1 protein ICP34.5. As to quaternary structure, (Microbial infection) Interacts with Zika virus non-structural protein 1/NS1 and non-structural protein 4B/NS4B. (Microbial infection) Interacts with SARS-CoV-2 non-structural protein 6; this interaction decreases IRF3 phosphorylation by 57%, which leads to reduced IFN-beta (IFNB) production. Interacts with SARS-CoV-2 helicase; this interaction inhibits TBK1 phosphorylation and decreases IRF3 phosphorylation by 75%, which leads to reduced IFN-beta production. Interacts with SARS-CoV-2 M protein; the interaction promotes TBK1 degradation via 'Lys-48'-linked ubiquitination. In terms of assembly, (Microbial infection) Interacts with human cytomegalovirus protein UL35; this interaction inhibits type I interferon production. As to quaternary structure, (Microbial infection) Interacts with heartland virus NSs; this interaction antagonizes TBK1 phosphorylation and inhibits TBK1-IRF3 interaction and thus the establishment of an antiviral state. (Microbial infection) Interacts (via N-terminus) with Severe fever with thrombocytopenia virus (SFTSV) NSs; this interaction antagonizes TBK1 phosphorylation and sequesters TBK1 in NSs-induced cytoplasmic inclusion bodies thereby inhibiting the IFN responses. In terms of processing, autophosphorylation at Ser-172 activates the kinase, and is an essential step for virus-triggered signaling. Phosphorylated by IKBKB/IKKB at Ser-172. Phosphorylation requires homodimerization and ubiquitination at Lys-30 and Lys-401. Dephosphorylated at Ser-172 by PPM1B and this negatively regulates its role in mediating antiviral response. 'Lys-63'-linked polyubiquitination by MIB1 after RNA virus infection, or by NRDP1 after LPS stimulation at Lys-30 and Lys-401, participates in kinase activation. 'Lys-48'-linked polyubiquitination at Lys-670 by DTX4 leads to proteasomal degradation. 'Lys-48'-linked polyubiquitination by TRAIP also leads to proteasomal degradation. 'Lys-48'-linked polyubiquitination by TRAF7; leading to proteasomal degradation. 'Lys-63'-linked polyubiquitination by RNF128 at Lys-30 and Lys-401 leads to the activation of antiviral responses. 'Lys-48'-linked polyubiquitination after 'lys-33'-linked deubiquitination by USP38 promotes TBK1 degradation. Post-translationally, (Microbial infection) Interaction with SARS-CoV-2 M protein induces 'Lys-48'-linked ubiquitination which leads to proteasomal degradation. In terms of processing, (Microbial infection) Deubiquitinated by Epstein-Barr virus BPLF1 on both 'Lys-48' and 'Lys-63'-linked ubiquitin chains; leading to inhibition of type I interfewron production. Monomethylation at Lys-607 by SETD4 maximizes TBK1 activation and promotes efficient interferon signaling. Ubiquitous with higher expression in testis. Expressed in the ganglion cells, nerve fiber layer and microvasculature of the retina.

The protein resides in the cytoplasm. It carries out the reaction L-seryl-[protein] + ATP = O-phospho-L-seryl-[protein] + ADP + H(+). It catalyses the reaction L-threonyl-[protein] + ATP = O-phospho-L-threonyl-[protein] + ADP + H(+). In terms of biological role, serine/threonine kinase that plays an essential role in regulating inflammatory responses to foreign agents. Following activation of toll-like receptors by viral or bacterial components, associates with TRAF3 and TANK and phosphorylates interferon regulatory factors (IRFs) IRF3 and IRF7 as well as DDX3X. This activity allows subsequent homodimerization and nuclear translocation of the IRFs leading to transcriptional activation of pro-inflammatory and antiviral genes including IFNA and IFNB. In order to establish such an antiviral state, TBK1 form several different complexes whose composition depends on the type of cell and cellular stimuli. Plays a key role in IRF3 activation: acts by first phosphorylating innate adapter proteins MAVS, STING1 and TICAM1 on their pLxIS motif, leading to recruitment of IRF3, thereby licensing IRF3 for phosphorylation by TBK1. Phosphorylated IRF3 dissociates from the adapter proteins, dimerizes, and then enters the nucleus to induce expression of interferons. Thus, several scaffolding molecules including FADD, TRADD, MAVS, AZI2, TANK or TBKBP1/SINTBAD can be recruited to the TBK1-containing-complexes. Under particular conditions, functions as a NF-kappa-B effector by phosphorylating NF-kappa-B inhibitor alpha/NFKBIA, IKBKB or RELA to translocate NF-Kappa-B to the nucleus. Restricts bacterial proliferation by phosphorylating the autophagy receptor OPTN/Optineurin on 'Ser-177', thus enhancing LC3 binding affinity and antibacterial autophagy. Phosphorylates SMCR8 component of the C9orf72-SMCR8 complex, promoting autophagosome maturation. Phosphorylates ATG8 proteins MAP1LC3C and GABARAPL2, thereby preventing their delipidation and premature removal from nascent autophagosomes. Seems to play a role in energy balance regulation by sustaining a state of chronic, low-grade inflammation in obesity, which leads to a negative impact on insulin sensitivity. Attenuates retroviral budding by phosphorylating the endosomal sorting complex required for transport-I (ESCRT-I) subunit VPS37C. Phosphorylates Borna disease virus (BDV) P protein. Plays an essential role in the TLR3- and IFN-dependent control of herpes virus HSV-1 and HSV-2 infections in the central nervous system. Acts both as a positive and negative regulator of the mTORC1 complex, depending on the context: activates mTORC1 in response to growth factors by catalyzing phosphorylation of MTOR, while it limits the mTORC1 complex by promoting phosphorylation of RPTOR. Acts as a positive regulator of the mTORC2 complex by mediating phosphorylation of MTOR, leading to increased phosphorylation and activation of AKT1. Phosphorylates and activates AKT1. Involved in the regulation of TNF-induced RIPK1-mediated cell death, probably acting via CYLD phosphorylation that in turn controls RIPK1 ubiquitination status. Also participates in the differentiation of T follicular regulatory cells together with the receptor ICOS. The chain is Serine/threonine-protein kinase TBK1 from Homo sapiens (Human).